Consider the following 289-residue polypeptide: Putative transmembrane protein ORF289 (289 aa).

The Extracellular segment spans residues 1–152 (MAIAKEFLLT…QYTSVVTFRT (152 aa)). Residues 153–173 (LVAPILYFFALFLVPAWSTVL) traverse the membrane as a helical segment. The Cytoplasmic segment spans residues 174 to 234 (KQNPTFPQSQ…NGEVTSTQVN (61 aa)). A helical transmembrane segment spans residues 235–255 (APIFIGVTTPSGVLVLAYNYY). The Extracellular segment spans residues 256–289 (SGTISKYVSLTVTTTYGSATVINQFETKTTGGTT).

The protein resides in the host membrane. The chain is Putative transmembrane protein ORF289 from Acidianus sp. F28 (AFV-2).